Consider the following 474-residue polypeptide: 3-isopropylmalate dehydratase large subunit (474 aa).

[4Fe-4S] cluster contacts are provided by C355, C415, and C418.

Belongs to the aconitase/IPM isomerase family. LeuC type 1 subfamily. In terms of assembly, heterodimer of LeuC and LeuD. Requires [4Fe-4S] cluster as cofactor.

The catalysed reaction is (2R,3S)-3-isopropylmalate = (2S)-2-isopropylmalate. It functions in the pathway amino-acid biosynthesis; L-leucine biosynthesis; L-leucine from 3-methyl-2-oxobutanoate: step 2/4. Catalyzes the isomerization between 2-isopropylmalate and 3-isopropylmalate, via the formation of 2-isopropylmaleate. In Shewanella oneidensis (strain ATCC 700550 / JCM 31522 / CIP 106686 / LMG 19005 / NCIMB 14063 / MR-1), this protein is 3-isopropylmalate dehydratase large subunit.